The chain runs to 368 residues: Quinolinate synthase (368 aa).

Positions 46 and 63 each coordinate iminosuccinate. Residue cysteine 110 participates in [4Fe-4S] cluster binding. Iminosuccinate contacts are provided by residues 141–143 and serine 162; that span reads YVN. Cysteine 230 is a binding site for [4Fe-4S] cluster. Residues 256–258 and threonine 273 contribute to the iminosuccinate site; that span reads HPE. Cysteine 320 lines the [4Fe-4S] cluster pocket.

Belongs to the quinolinate synthase family. Type 3 subfamily. It depends on [4Fe-4S] cluster as a cofactor.

Its subcellular location is the cytoplasm. It carries out the reaction iminosuccinate + dihydroxyacetone phosphate = quinolinate + phosphate + 2 H2O + H(+). The protein operates within cofactor biosynthesis; NAD(+) biosynthesis; quinolinate from iminoaspartate: step 1/1. In terms of biological role, catalyzes the condensation of iminoaspartate with dihydroxyacetone phosphate to form quinolinate. The protein is Quinolinate synthase of Bacillus thuringiensis (strain Al Hakam).